The chain runs to 242 residues: Carboxy-S-adenosyl-L-methionine synthase (242 aa).

S-adenosyl-L-methionine is bound by residues Y39, 64–66 (GCS), 89–90 (DN), 117–118 (DI), N132, and R199.

It belongs to the class I-like SAM-binding methyltransferase superfamily. Cx-SAM synthase family. As to quaternary structure, homodimer.

The enzyme catalyses prephenate + S-adenosyl-L-methionine = carboxy-S-adenosyl-L-methionine + 3-phenylpyruvate + H2O. Functionally, catalyzes the conversion of S-adenosyl-L-methionine (SAM) to carboxy-S-adenosyl-L-methionine (Cx-SAM). The polypeptide is Carboxy-S-adenosyl-L-methionine synthase (Aliivibrio fischeri (strain ATCC 700601 / ES114) (Vibrio fischeri)).